We begin with the raw amino-acid sequence, 92 residues long: Small ribosomal subunit protein uS19 (92 aa).

The protein belongs to the universal ribosomal protein uS19 family.

Its function is as follows. Protein S19 forms a complex with S13 that binds strongly to the 16S ribosomal RNA. This is Small ribosomal subunit protein uS19 from Rickettsia typhi (strain ATCC VR-144 / Wilmington).